A 568-amino-acid polypeptide reads, in one-letter code: Potassium-transporting ATPase potassium-binding subunit (568 aa).

10 helical membrane-spanning segments follow: residues 7–27, 65–85, 135–155, 177–197, 254–274, 286–306, 383–403, 422–442, 489–509, and 530–550; these read AEIA…GLFL, SYAL…YAIL, AGLT…AAAV, VSLY…VALG, LTNL…VVAF, ALIT…YWTE, GLYG…LMVG, MLAV…AAVL, LGIA…AIAG, and LFIG…FFPA.

Belongs to the KdpA family. In terms of assembly, the system is composed of three essential subunits: KdpA, KdpB and KdpC.

It localises to the cell inner membrane. In terms of biological role, part of the high-affinity ATP-driven potassium transport (or Kdp) system, which catalyzes the hydrolysis of ATP coupled with the electrogenic transport of potassium into the cytoplasm. This subunit binds the periplasmic potassium ions and delivers the ions to the membrane domain of KdpB through an intramembrane tunnel. The sequence is that of Potassium-transporting ATPase potassium-binding subunit from Beijerinckia indica subsp. indica (strain ATCC 9039 / DSM 1715 / NCIMB 8712).